The chain runs to 190 residues: Elongation factor P-like protein (190 aa).

This sequence belongs to the elongation factor P family.

The sequence is that of Elongation factor P-like protein from Shigella dysenteriae serotype 1 (strain Sd197).